The following is a 197-amino-acid chain: Glycerol-3-phosphate acyltransferase (197 aa).

6 helical membrane passes run Met1–Ile21, Trp50–Ala70, Gly77–Leu97, Met111–Leu131, Phe136–Leu156, and Gly157–Lys177.

Belongs to the PlsY family. In terms of assembly, probably interacts with PlsX.

The protein resides in the cell inner membrane. It catalyses the reaction an acyl phosphate + sn-glycerol 3-phosphate = a 1-acyl-sn-glycero-3-phosphate + phosphate. Its pathway is lipid metabolism; phospholipid metabolism. Functionally, catalyzes the transfer of an acyl group from acyl-phosphate (acyl-PO(4)) to glycerol-3-phosphate (G3P) to form lysophosphatidic acid (LPA). This enzyme utilizes acyl-phosphate as fatty acyl donor, but not acyl-CoA or acyl-ACP. The protein is Glycerol-3-phosphate acyltransferase of Prochlorococcus marinus (strain MIT 9312).